A 205-amino-acid chain; its full sequence is LIM domain-containing protein PLIM2b (205 aa).

2 LIM zinc-binding domains span residues 8–68 (DKCN…LFKE) and 102–162 (DKCA…LFME). A disordered region spans residues 177-205 (RTASGNTLPPEPTEDVAVEAKEENGVSES). Residues 194-205 (VEAKEENGVSES) show a composition bias toward basic and acidic residues.

In terms of assembly, interacts with F-actin. Predominantly expressed in flowers and in pollen grains. Detected in vasculature and roots.

The protein localises to the cytoplasm. It localises to the cytoskeleton. Binds to actin filaments and promotes cross-linking into thick bundles. Has an actin-stabilizing activity. The actin regulatory activities are inhibited by pH &gt; 6.8 but are [Ca(2+)] independent. The polypeptide is LIM domain-containing protein PLIM2b (Arabidopsis thaliana (Mouse-ear cress)).